The sequence spans 130 residues: Small ribosomal subunit protein uS9 (130 aa).

Belongs to the universal ribosomal protein uS9 family.

This chain is Small ribosomal subunit protein uS9, found in Pseudomonas putida (strain ATCC 700007 / DSM 6899 / JCM 31910 / BCRC 17059 / LMG 24140 / F1).